Here is a 368-residue protein sequence, read N- to C-terminus: Probable endopolygalacturonase A (368 aa).

A signal peptide spans Met-1–Ala-18. The propeptide occupies Ala-19–Arg-31. The cysteines at positions 35 and 50 are disulfide-linked. PbH1 repeat units follow at residues Leu-140–Ala-162, Leu-167–Glu-192, Ser-193–Ser-214, Gly-215–Ser-235, Val-244–Thr-265, Val-273–Gln-295, and Thr-307–Gly-352. Asp-207 functions as the Proton donor in the catalytic mechanism. Cys-209 and Cys-225 are joined by a disulfide. The active site involves His-229. Asn-246 carries an N-linked (GlcNAc...) asparagine glycan. Disulfide bonds link Cys-335/Cys-340 and Cys-359/Cys-368.

It belongs to the glycosyl hydrolase 28 family.

It localises to the secreted. It carries out the reaction (1,4-alpha-D-galacturonosyl)n+m + H2O = (1,4-alpha-D-galacturonosyl)n + (1,4-alpha-D-galacturonosyl)m.. Functionally, involved in maceration and soft-rotting of plant tissue. Hydrolyzes the 1,4-alpha glycosidic bonds of de-esterified pectate in the smooth region of the plant cell wall. The chain is Probable endopolygalacturonase A (pgaA) from Aspergillus fumigatus (strain CBS 144.89 / FGSC A1163 / CEA10) (Neosartorya fumigata).